Reading from the N-terminus, the 280-residue chain is Bis(5'-nucleosyl)-tetraphosphatase, symmetrical (280 aa).

This sequence belongs to the Ap4A hydrolase family.

It carries out the reaction P(1),P(4)-bis(5'-adenosyl) tetraphosphate + H2O = 2 ADP + 2 H(+). Hydrolyzes diadenosine 5',5'''-P1,P4-tetraphosphate to yield ADP. In Paracidovorax citrulli (strain AAC00-1) (Acidovorax citrulli), this protein is Bis(5'-nucleosyl)-tetraphosphatase, symmetrical.